The following is a 509-amino-acid chain: Photosystem II CP47 reaction center protein (509 aa).

6 helical membrane-spanning segments follow: residues 21 to 36 (AVHLMHTALVAGWAGS), 101 to 115 (IILSGMCFLAAIWHW), 140 to 156 (GIHLFLSGLLCFGFGAF), 203 to 218 (IAAGIFGIFAGIFHLT), 237 to 252 (VLSSSIAAVFFAAFVT), and 457 to 472 (NFALLFFFGHLWHGGR).

It belongs to the PsbB/PsbC family. PsbB subfamily. PSII is composed of 1 copy each of membrane proteins PsbA, PsbB, PsbC, PsbD, PsbE, PsbF, PsbH, PsbI, PsbJ, PsbK, PsbL, PsbM, PsbT, PsbX, PsbY, PsbZ, Psb30/Ycf12, at least 3 peripheral proteins of the oxygen-evolving complex and a large number of cofactors. It forms dimeric complexes. It depends on Binds multiple chlorophylls. PSII binds additional chlorophylls, carotenoids and specific lipids. as a cofactor.

It is found in the plastid. Its subcellular location is the chloroplast thylakoid membrane. In terms of biological role, one of the components of the core complex of photosystem II (PSII). It binds chlorophyll and helps catalyze the primary light-induced photochemical processes of PSII. PSII is a light-driven water:plastoquinone oxidoreductase, using light energy to abstract electrons from H(2)O, generating O(2) and a proton gradient subsequently used for ATP formation. In Trieres chinensis (Marine centric diatom), this protein is Photosystem II CP47 reaction center protein.